The chain runs to 560 residues: Dihydroxy-acid dehydratase (560 aa).

Asp80 contacts Mg(2+). Cys121 provides a ligand contact to [2Fe-2S] cluster. Mg(2+)-binding residues include Asp122 and Lys123. Position 123 is an N6-carboxylysine (Lys123). Cys194 contacts [2Fe-2S] cluster. Glu447 lines the Mg(2+) pocket. Residue Ser473 is the Proton acceptor of the active site.

It belongs to the IlvD/Edd family. In terms of assembly, homodimer. [2Fe-2S] cluster is required as a cofactor. The cofactor is Mg(2+).

The enzyme catalyses (2R)-2,3-dihydroxy-3-methylbutanoate = 3-methyl-2-oxobutanoate + H2O. It carries out the reaction (2R,3R)-2,3-dihydroxy-3-methylpentanoate = (S)-3-methyl-2-oxopentanoate + H2O. Its pathway is amino-acid biosynthesis; L-isoleucine biosynthesis; L-isoleucine from 2-oxobutanoate: step 3/4. The protein operates within amino-acid biosynthesis; L-valine biosynthesis; L-valine from pyruvate: step 3/4. Functions in the biosynthesis of branched-chain amino acids. Catalyzes the dehydration of (2R,3R)-2,3-dihydroxy-3-methylpentanoate (2,3-dihydroxy-3-methylvalerate) into 2-oxo-3-methylpentanoate (2-oxo-3-methylvalerate) and of (2R)-2,3-dihydroxy-3-methylbutanoate (2,3-dihydroxyisovalerate) into 2-oxo-3-methylbutanoate (2-oxoisovalerate), the penultimate precursor to L-isoleucine and L-valine, respectively. The polypeptide is Dihydroxy-acid dehydratase (Chloroherpeton thalassium (strain ATCC 35110 / GB-78)).